A 414-amino-acid chain; its full sequence is Dihydroorotase (414 aa).

Histidine 57 and histidine 59 together coordinate Zn(2+). Substrate-binding positions include 59–61 and asparagine 91; that span reads HLR. Zn(2+) is bound by residues lysine 135, histidine 164, histidine 204, and aspartate 272. Residue lysine 135 is modified to N6-carboxylysine. Aspartate 272 is an active-site residue. Substrate-binding positions include histidine 276 and 286–287; that span reads AG.

This sequence belongs to the metallo-dependent hydrolases superfamily. DHOase family. Class I DHOase subfamily. Zn(2+) is required as a cofactor.

It carries out the reaction (S)-dihydroorotate + H2O = N-carbamoyl-L-aspartate + H(+). Its pathway is pyrimidine metabolism; UMP biosynthesis via de novo pathway; (S)-dihydroorotate from bicarbonate: step 3/3. In terms of biological role, catalyzes the reversible cyclization of carbamoyl aspartate to dihydroorotate. This Pyrococcus furiosus (strain ATCC 43587 / DSM 3638 / JCM 8422 / Vc1) protein is Dihydroorotase.